Here is a 139-residue protein sequence, read N- to C-terminus: Superoxide dismutase [Cu-Zn] (139 aa).

C6 carries S-palmitoyl cysteine lipidation. Residues H47 and H49 each contribute to the Cu cation site. Zn(2+)-binding residues include H72, H81, and D84. Position 114 (H114) interacts with Cu cation. Basic and acidic residues predominate over residues 118–129 (DDLGKGGNDESL). The interval 118-139 (DDLGKGGNDESLKTGNAGGRMA) is disordered.

Belongs to the Cu-Zn superoxide dismutase family. As to quaternary structure, homodimer. Requires Cu cation as cofactor. The cofactor is Zn(2+).

Its subcellular location is the cytoplasm. The protein localises to the nucleus. The catalysed reaction is 2 superoxide + 2 H(+) = H2O2 + O2. Functionally, destroys radicals which are normally produced within the cells and which are toxic to biological systems. This is Superoxide dismutase [Cu-Zn] (sod1) from Lampanyctus crocodilus (Jewel lanternfish).